A 1288-amino-acid chain; its full sequence is Photoreceptor cilium actin regulator (1288 aa).

A lipid anchor (N-myristoyl glycine) is attached at G2. A lipid anchor (S-palmitoyl cysteine) is attached at C3. Disordered stretches follow at residues M78 to R147, Q368 to P401, Q423 to S453, P467 to A527, D563 to E605, Q686 to P707, A813 to Q1109, E1132 to P1169, and L1190 to S1288. 3 stretches are compositionally biased toward polar residues: residues T96 to H109, S382 to P401, and C434 to S453. Over residues D483 to D495 the composition is skewed to acidic residues. Polar residues-rich tracts occupy residues S848–N857, S894–H904, P927–K946, and P966–S976. Low complexity predominate over residues P1018–T1028. Pro residues-rich tracts occupy residues P1051 to S1063 and P1071 to S1094. A compositionally biased stretch (basic and acidic residues) spans Q1097 to E1106. Over residues D1209–E1226 the composition is skewed to polar residues. The segment covering R1268 to Q1277 has biased composition (basic and acidic residues). The span at P1278–S1288 shows a compositional bias: polar residues.

As to expression, specifically expressed in retina.

The protein resides in the cell projection. It is found in the cilium. The protein localises to the photoreceptor outer segment. Its subcellular location is the photoreceptor inner segment. Plays an essential role for normal photoreceptor cell maintenance and vision. This chain is Photoreceptor cilium actin regulator, found in Homo sapiens (Human).